A 241-amino-acid polypeptide reads, in one-letter code: uncharacterized protein (241 aa).

A run of 7 helical transmembrane segments spans residues 12–32, 39–59, 89–109, 117–137, 152–172, 180–200, and 215–235; these read ITEIYFQYVIYILCFGVLLLL, LLWLHLVSILVGLIANYEMKF, VYDVICHTIMVVICYHQICYT, YYTFHLFSVMIIIGALFNCVV, LFEYTTIFQALSTGYWVATML, IHFYSHWIIWIGLMTINWFVY, and YVEAVFIVCTWYSGIISSPLI.

Belongs to the mimivirus L68/R809 family.

The protein resides in the membrane. This is an uncharacterized protein from Acanthamoeba polyphaga mimivirus (APMV).